The sequence spans 84 residues: MKVSVLITLAVLGVMFLLTSAEERGSDQMDSPAWLKSMERIFQSEERECRWLFGGCEKDSDCCEHLGCRRAKPSWCGWDFTVGK.

An N-terminal signal peptide occupies residues 1 to 21 (MKVSVLITLAVLGVMFLLTSA). Residues 22–47 (EERGSDQMDSPAWLKSMERIFQSEER) constitute a propeptide that is removed on maturation. 3 disulfides stabilise this stretch: Cys-49/Cys-63, Cys-56/Cys-68, and Cys-62/Cys-76. Position 82 is a valine amide (Val-82).

This sequence belongs to the neurotoxin 10 (Hwtx-1) family. 05 (F4a) subfamily. Expressed by the venom gland.

Its subcellular location is the secreted. Functionally, probable ion channel inhibitor. This chain is U21-theraphotoxin-Cg1a 3, found in Chilobrachys guangxiensis (Chinese earth tiger tarantula).